Consider the following 441-residue polypeptide: ACT domain-containing protein ACR8 (441 aa).

ACT domains follow at residues Ile-34–Val-110, Ala-115–Lys-196, Val-248–Gly-324, and Arg-326–His-405.

In terms of tissue distribution, expressed in roots, leaves, flowers and siliques.

May bind amino acids. This is ACT domain-containing protein ACR8 from Arabidopsis thaliana (Mouse-ear cress).